An 84-amino-acid chain; its full sequence is RNA-binding protein Hfq (84 aa).

The 60-residue stretch at 10–69 (EPFLNTLRREHVPVSIYLVNGIKLQGQIESFDQYVVLLRNTVTQMVFKHAISTIVPGRAV) folds into the Sm domain.

It belongs to the Hfq family. In terms of assembly, homohexamer.

RNA chaperone that binds small regulatory RNA (sRNAs) and mRNAs to facilitate mRNA translational regulation in response to envelope stress, environmental stress and changes in metabolite concentrations. Also binds with high specificity to tRNAs. This is RNA-binding protein Hfq from Verminephrobacter eiseniae (strain EF01-2).